Here is a 279-residue protein sequence, read N- to C-terminus: HTH-type transcriptional activator RhaS (279 aa).

Positions 175-273 (QALLGWLQNN…SQAPKSLRHQ (99 aa)) constitute an HTH araC/xylS-type domain. DNA-binding regions (H-T-H motif) lie at residues 192–213 (GSLA…KQHT) and 240–263 (ITTI…RKAF).

In terms of assembly, binds DNA as a dimer.

It is found in the cytoplasm. In terms of biological role, activates expression of the rhaBAD and rhaT operons. The polypeptide is HTH-type transcriptional activator RhaS (Pectobacterium carotovorum subsp. carotovorum (strain PC1)).